The following is a 251-amino-acid chain: Fibroblast growth factor-binding protein 1 (251 aa).

A signal peptide spans 1–20 (MRLHSLILLSFLLLATQAFS). The tract at residues 25 to 62 (KRAKNAPHSTAEEGVEGSAPSLGKAQNKQRSRTSKSLT) is disordered. 3 cysteine pairs are disulfide-bonded: cysteine 74–cysteine 91, cysteine 100–cysteine 133, and cysteine 109–cysteine 145. The tract at residues 160–189 (NARGNTKPRKEKAEVSAREHNKVQEAVSTE) is disordered. Positions 170 to 182 (EKAEVSAREHNKV) are enriched in basic and acidic residues. A glycan (O-linked (GalNAc...) serine) is linked at serine 175. Residues 210 to 251 (RDPECLEDPDVLNQRKTALEFCGESWSSICTFFLNMLQATSC) form a sufficient for interaction with FGF2 and FGF2-induced effects region. Intrachain disulfides connect cysteine 214-cysteine 251 and cysteine 231-cysteine 239.

Belongs to the fibroblast growth factor-binding protein family. As to quaternary structure, found in a complex with FGFBP1, FGF1 and FGF2. Interacts with FGF1, FGF7, FGF10, FGF22 and HSPG2. Interacts with FGF2. As to expression, expressed in intestine, ovary, lung, placenta and normal and wounded skin.

The protein localises to the secreted. Its subcellular location is the extracellular space. It is found in the cell membrane. In terms of biological role, acts as a carrier protein that releases fibroblast-binding factors (FGFs) from the extracellular matrix (EM) storage and thus enhances the mitogenic activity of FGFs. Enhances FGF2 signaling during tissue repair, angiogenesis and in tumor growth. The sequence is that of Fibroblast growth factor-binding protein 1 (Fgfbp1) from Mus musculus (Mouse).